Here is a 180-residue protein sequence, read N- to C-terminus: NADH-quinone oxidoreductase subunit I (180 aa).

4Fe-4S ferredoxin-type domains follow at residues 48-80 (IVLT…LQKA) and 90-119 (EFFR…LTPD). Positions 60, 63, 66, 70, 99, 102, 105, and 109 each coordinate [4Fe-4S] cluster.

Belongs to the complex I 23 kDa subunit family. NDH-1 is composed of 13 different subunits. Subunits NuoA, H, J, K, L, M, N constitute the membrane sector of the complex. It depends on [4Fe-4S] cluster as a cofactor.

The protein localises to the cell inner membrane. The enzyme catalyses a quinone + NADH + 5 H(+)(in) = a quinol + NAD(+) + 4 H(+)(out). Functionally, NDH-1 shuttles electrons from NADH, via FMN and iron-sulfur (Fe-S) centers, to quinones in the respiratory chain. The immediate electron acceptor for the enzyme in this species is believed to be ubiquinone. Couples the redox reaction to proton translocation (for every two electrons transferred, four hydrogen ions are translocated across the cytoplasmic membrane), and thus conserves the redox energy in a proton gradient. In Sodalis glossinidius (strain morsitans), this protein is NADH-quinone oxidoreductase subunit I.